Consider the following 107-residue polypeptide: Neuroparsin-A (107 aa).

Residues 1 to 22 form the signal peptide; it reads MKATAALVAATLLLAVTLFHRA. A propeptide spanning residues 23-24 is cleaved from the precursor; the sequence is ER.

As to quaternary structure, homodimer; disulfide-linked.

Its function is as follows. Neurosparins are multifunctional neurohormones: they inhibit the effects of juvenile hormone, stimulate fluid reabsorption of isolated recta and induces an increase in hemolymph lipid and trehalose levels. The sequence is that of Neuroparsin-A from Locusta migratoria (Migratory locust).